Reading from the N-terminus, the 177-residue chain is ATP synthase subunit delta (177 aa).

This sequence belongs to the ATPase delta chain family. F-type ATPases have 2 components, F(1) - the catalytic core - and F(0) - the membrane proton channel. F(1) has five subunits: alpha(3), beta(3), gamma(1), delta(1), epsilon(1). F(0) has three main subunits: a(1), b(2) and c(10-14). The alpha and beta chains form an alternating ring which encloses part of the gamma chain. F(1) is attached to F(0) by a central stalk formed by the gamma and epsilon chains, while a peripheral stalk is formed by the delta and b chains.

It localises to the cell inner membrane. In terms of biological role, f(1)F(0) ATP synthase produces ATP from ADP in the presence of a proton or sodium gradient. F-type ATPases consist of two structural domains, F(1) containing the extramembraneous catalytic core and F(0) containing the membrane proton channel, linked together by a central stalk and a peripheral stalk. During catalysis, ATP synthesis in the catalytic domain of F(1) is coupled via a rotary mechanism of the central stalk subunits to proton translocation. This protein is part of the stalk that links CF(0) to CF(1). It either transmits conformational changes from CF(0) to CF(1) or is implicated in proton conduction. This chain is ATP synthase subunit delta, found in Actinobacillus pleuropneumoniae serotype 7 (strain AP76).